The following is a 340-amino-acid chain: Phosphoribosylformylglycinamidine cyclo-ligase (340 aa).

The protein belongs to the AIR synthase family.

The protein resides in the cytoplasm. It catalyses the reaction 2-formamido-N(1)-(5-O-phospho-beta-D-ribosyl)acetamidine + ATP = 5-amino-1-(5-phospho-beta-D-ribosyl)imidazole + ADP + phosphate + H(+). It functions in the pathway purine metabolism; IMP biosynthesis via de novo pathway; 5-amino-1-(5-phospho-D-ribosyl)imidazole from N(2)-formyl-N(1)-(5-phospho-D-ribosyl)glycinamide: step 2/2. This is Phosphoribosylformylglycinamidine cyclo-ligase from Streptococcus agalactiae serotype III (strain NEM316).